Here is a 375-residue protein sequence, read N- to C-terminus: Chaperone protein DnaJ (375 aa).

The 65-residue stretch at aspartate 5–glycine 69 folds into the J domain. A CR-type zinc finger spans residues glycine 131 to asparagine 213. Zn(2+) contacts are provided by cysteine 144, cysteine 147, cysteine 161, cysteine 164, cysteine 187, cysteine 190, cysteine 201, and cysteine 204. 4 CXXCXGXG motif repeats span residues cysteine 144 to glycine 151, cysteine 161 to glycine 168, cysteine 187 to glycine 194, and cysteine 201 to glycine 208.

Belongs to the DnaJ family. Homodimer. Zn(2+) is required as a cofactor.

The protein localises to the cytoplasm. Functionally, participates actively in the response to hyperosmotic and heat shock by preventing the aggregation of stress-denatured proteins and by disaggregating proteins, also in an autonomous, DnaK-independent fashion. Unfolded proteins bind initially to DnaJ; upon interaction with the DnaJ-bound protein, DnaK hydrolyzes its bound ATP, resulting in the formation of a stable complex. GrpE releases ADP from DnaK; ATP binding to DnaK triggers the release of the substrate protein, thus completing the reaction cycle. Several rounds of ATP-dependent interactions between DnaJ, DnaK and GrpE are required for fully efficient folding. Also involved, together with DnaK and GrpE, in the DNA replication of plasmids through activation of initiation proteins. The protein is Chaperone protein DnaJ of Oceanobacillus iheyensis (strain DSM 14371 / CIP 107618 / JCM 11309 / KCTC 3954 / HTE831).